The following is a 340-amino-acid chain: Glycerol-3-phosphate dehydrogenase [NAD(P)+] (340 aa).

Residues Ser-13, Trp-14, and Lys-108 each contribute to the NADPH site. Sn-glycerol 3-phosphate contacts are provided by Lys-108, Gly-139, and Ser-141. Ala-143 is a binding site for NADPH. Sn-glycerol 3-phosphate contacts are provided by Lys-194, Asp-247, Ser-257, Arg-258, and Asn-259. Residue Lys-194 is the Proton acceptor of the active site. Arg-258 contributes to the NADPH binding site. Positions 282 and 284 each coordinate NADPH.

Belongs to the NAD-dependent glycerol-3-phosphate dehydrogenase family.

It localises to the cytoplasm. It catalyses the reaction sn-glycerol 3-phosphate + NAD(+) = dihydroxyacetone phosphate + NADH + H(+). The catalysed reaction is sn-glycerol 3-phosphate + NADP(+) = dihydroxyacetone phosphate + NADPH + H(+). The protein operates within membrane lipid metabolism; glycerophospholipid metabolism. Functionally, catalyzes the reduction of the glycolytic intermediate dihydroxyacetone phosphate (DHAP) to sn-glycerol 3-phosphate (G3P), the key precursor for phospholipid synthesis. In Streptococcus sanguinis (strain SK36), this protein is Glycerol-3-phosphate dehydrogenase [NAD(P)+].